We begin with the raw amino-acid sequence, 367 residues long: Protein RecA (367 aa).

73-80 lines the ATP pocket; it reads GPESSGKT. The interval 345–367 is disordered; that stretch reads DEPVAKKASAKESKEAKELKEVE.

Belongs to the RecA family.

The protein resides in the cytoplasm. Its function is as follows. Can catalyze the hydrolysis of ATP in the presence of single-stranded DNA, the ATP-dependent uptake of single-stranded DNA by duplex DNA, and the ATP-dependent hybridization of homologous single-stranded DNAs. It interacts with LexA causing its activation and leading to its autocatalytic cleavage. The chain is Protein RecA from Janthinobacterium sp. (strain Marseille) (Minibacterium massiliensis).